The primary structure comprises 139 residues: Nucleoside diphosphate kinase (139 aa).

ATP-binding residues include K10, F58, R86, T92, R103, and N113. The active-site Pros-phosphohistidine intermediate is H116.

Belongs to the NDK family. In terms of assembly, homotetramer. Requires Mg(2+) as cofactor.

The protein resides in the cytoplasm. It carries out the reaction a 2'-deoxyribonucleoside 5'-diphosphate + ATP = a 2'-deoxyribonucleoside 5'-triphosphate + ADP. The catalysed reaction is a ribonucleoside 5'-diphosphate + ATP = a ribonucleoside 5'-triphosphate + ADP. Major role in the synthesis of nucleoside triphosphates other than ATP. The ATP gamma phosphate is transferred to the NDP beta phosphate via a ping-pong mechanism, using a phosphorylated active-site intermediate. The protein is Nucleoside diphosphate kinase of Caulobacter vibrioides (strain ATCC 19089 / CIP 103742 / CB 15) (Caulobacter crescentus).